The chain runs to 149 residues: 3-dehydroquinate dehydratase (149 aa).

The active-site Proton acceptor is the Y26. The substrate site is built by N77, H83, and D90. H103 functions as the Proton donor in the catalytic mechanism. Substrate contacts are provided by residues 104–105 (LS) and R114.

It belongs to the type-II 3-dehydroquinase family. Homododecamer.

The catalysed reaction is 3-dehydroquinate = 3-dehydroshikimate + H2O. It functions in the pathway metabolic intermediate biosynthesis; chorismate biosynthesis; chorismate from D-erythrose 4-phosphate and phosphoenolpyruvate: step 3/7. Catalyzes a trans-dehydration via an enolate intermediate. The polypeptide is 3-dehydroquinate dehydratase (Vibrio vulnificus (strain YJ016)).